Consider the following 215-residue polypeptide: Guanylate kinase (215 aa).

One can recognise a Guanylate kinase-like domain in the interval 6-185 (GAILVLSGPS…SEKLLLSIAR (180 aa)). An ATP-binding site is contributed by 13-20 (GPSGSGKS).

Belongs to the guanylate kinase family.

It is found in the cytoplasm. It carries out the reaction GMP + ATP = GDP + ADP. Its function is as follows. Essential for recycling GMP and indirectly, cGMP. This is Guanylate kinase from Wolinella succinogenes (strain ATCC 29543 / DSM 1740 / CCUG 13145 / JCM 31913 / LMG 7466 / NCTC 11488 / FDC 602W) (Vibrio succinogenes).